Here is a 476-residue protein sequence, read N- to C-terminus: Efflux pump atB (476 aa).

Residues 1-38 (MAPQLAGSSHSSSASDQAHRQSSDPALESGSDTHVGSI) are disordered. 10 helical membrane passes run 69 to 89 (LIVAIVSSTRLGLSPMILAPL), 96 to 116 (KPVYVVSMFFFVVWIIPCAVA), 127 to 147 (FFNGFAGAAFLSVAGGTVGDL), 186 to 206 (WSFYILLIWAFAQWVSISLLV), 264 to 284 (LLLCLFCSVLLGVLYLFFGAF), 294 to 314 (FNLWQVGLSFLGITVGMIIGI), 347 to 367 (LPPAVGGAPLVTIGLLWFAWT), 372 to 392 (VHWIVPIIGSGIFGAGVIMIF), 403 to 425 (YPLYAASALAANSFSRSMFAAAF), and 440 to 460 (WAGFLLAMITLLLAPFPYIFY).

Belongs to the major facilitator superfamily.

It is found in the cell membrane. Its function is as follows. Efflux pump that might be required for efficient secretion of terreic acid. This Aspergillus terreus (strain NIH 2624 / FGSC A1156) protein is Efflux pump atB.